Consider the following 146-residue polypeptide: SMR1 protein (146 aa).

Positions 1–22 (MKSLYLIFGLWILLACFQSGEG) are cleaved as a signal peptide. Disordered regions lie at residues 23–43 (VRGP…TLPH) and 99–146 (TAPD…GGGK). Over residues 109–139 (PPTQLHSTEQANTKTDAKISNTTATTQNSTD) the composition is skewed to polar residues. 2 N-linked (GlcNAc...) asparagine glycosylation sites follow: N129 and N136.

Post-translationally, several O-linked glycosylation sites might be present in the C-terminal part. In terms of tissue distribution, expressed predominantly in the acinar cells of the submandibular gland and to lesser extent in the prostate.

The protein resides in the secreted. Sialorphin may be involved in the modulation of mineral balance between at least four systems: kidney, bone, tooth and circulation. In terms of biological role, submandibular gland peptide T is able to directly or indirectly down-regulate cardiovascular depression induced by septic shock (endotoxin stimuli), or anaphylactic challenge (nematode antigen sensitization). Its function is as follows. Sialorphin is an endogenous inhibitor of neprilysin. Inhibits the breakdown of Met-enkephalin and substance P in isolated tissue from the dorsal zone of the rat spinal cord. Has an analgesic effect when administered to rats by intravenous injection. In Rattus norvegicus (Rat), this protein is SMR1 protein (Vcsa1).